We begin with the raw amino-acid sequence, 123 residues long: Small ribosomal subunit protein cS23 (123 aa).

It belongs to the chloroplast-specific ribosomal protein cS23 family. As to quaternary structure, part of the 30S ribosomal subunit.

It localises to the plastid. It is found in the chloroplast. Functionally, probably a ribosomal protein or a ribosome-associated protein. The sequence is that of Small ribosomal subunit protein cS23 (ycf65) from Mesostigma viride (Green alga).